A 105-amino-acid chain; its full sequence is Synaptic plasticity regulator PANTS (105 aa).

This sequence belongs to the UPF0545 family. Interacts with RTN4 isoform A/Nogo-A; the interaction results in enhanced RTN4-mediated inhibition of AMPA receptor clustering. Also interacts with NCAM1, RANBP2 and CCT8. Post-translationally, rapidly degraded by proteolysis following neuronal stimulation, resulting in increased AMPA receptor clustering. In the postnatal brain, expressed diffusely throughout the hippocampus at a low level at 8 weeks (at protein level). At 16 weeks, strongly expressed in the stratum lucidum of the hippocampus (at protein level). In developing and aging brain, expression is strongest in hippocampus, especially in areas CA3 and CA2, throughout the dorsoventral axis.

Its subcellular location is the synapse. The protein resides in the synaptic cleft. Negatively regulates long-term potentiation and modulates adult synaptic plasticity. Stabilizes the interaction of RTN4 isoform A/Nogo-A with its receptors, inhibiting clustering of postsynaptic AMPA receptors at synaptic sites. Upon neuronal stimulation, degraded at synapses, reducing RTN4 signaling and allowing AMPA receptor clustering at individual synapses. The chain is Synaptic plasticity regulator PANTS from Mus musculus (Mouse).